The primary structure comprises 190 residues: Mediator of RNA polymerase II transcription subunit 28 (190 aa).

Positions 76–108 (MLIKDENQDLSIEIQRKEALLQKHYNRLEEWKA) form a coiled coil.

The protein belongs to the Mediator complex subunit 28 family. Component of the Mediator complex.

It is found in the nucleus. Functionally, component of the Mediator complex, a coactivator involved in the regulated transcription of nearly all RNA polymerase II-dependent genes. Mediator functions as a bridge to convey information from gene-specific regulatory proteins to the basal RNA polymerase II transcription machinery. Mediator is recruited to promoters by direct interactions with regulatory proteins and serves as a scaffold for the assembly of a functional preinitiation complex with RNA polymerase II and the general transcription factors. This is Mediator of RNA polymerase II transcription subunit 28 (MED28) from Drosophila pseudoobscura pseudoobscura (Fruit fly).